The chain runs to 241 residues: Proteasome subunit alpha (241 aa).

The protein belongs to the peptidase T1A family. The 20S proteasome core is composed of 14 alpha and 14 beta subunits that assemble into four stacked heptameric rings, resulting in a barrel-shaped structure. The two inner rings, each composed of seven catalytic beta subunits, are sandwiched by two outer rings, each composed of seven alpha subunits. The catalytic chamber with the active sites is on the inside of the barrel. Has a gated structure, the ends of the cylinder being occluded by the N-termini of the alpha-subunits. Is capped by the proteasome-associated ATPase, ARC.

It is found in the cytoplasm. Its pathway is protein degradation; proteasomal Pup-dependent pathway. The formation of the proteasomal ATPase ARC-20S proteasome complex, likely via the docking of the C-termini of ARC into the intersubunit pockets in the alpha-rings, may trigger opening of the gate for substrate entry. Interconversion between the open-gate and close-gate conformations leads to a dynamic regulation of the 20S proteasome proteolysis activity. Functionally, component of the proteasome core, a large protease complex with broad specificity involved in protein degradation. This chain is Proteasome subunit alpha, found in Parafrankia sp. (strain EAN1pec).